The following is a 147-amino-acid chain: MQREEVTELIVLQKIRKQLSWAQLAEVIGQSKEWSTAAMLGQMTLTRAQAEAVGTALELPQEAIALLQVPPYKGSLPTAVPTDPLIYRFYELVSVYGTTFKALIHEEFGDGIMSAIDFNMDLTREPDPKGDRVRIVMSGKFLPYKTY.

Residues Arg-88, Glu-91, and Ser-114 contribute to the active site.

This sequence belongs to the cyanase family.

The catalysed reaction is cyanate + hydrogencarbonate + 3 H(+) = NH4(+) + 2 CO2. Functionally, catalyzes the reaction of cyanate with bicarbonate to produce ammonia and carbon dioxide. In Ralstonia pickettii (strain 12J), this protein is Cyanate hydratase.